We begin with the raw amino-acid sequence, 341 residues long: MVSSQPKYDLIREVGRGSYGVVYEAVIRKTSARVAVKKIRCHAPENVELALREFWALSSIKSQHPNVIHLEECILQKDGMVQKMSHGSNSSLYLQLVETSLKGEIAFDPRSAYYLWFVMDFCDGGDMNEYLLSRKPNRKTNTSFMLQLSSALAFLHKNQIIHRDLKPDNILISQSRMDTSDLEPTLKVADFGLSKVCSASGQNPEEPVSVNKCFLSTACGTDFYMAPEVWEGHYTAKADIFALGIIIWAMLERITFIDTETKKELLGSYVKQGTEIVPVGEALLENPKMELLIPVKKKSMNGRMKQLIKEMLAANPQDRPDAFELELRLVQIAFKDSSWET.

A Protein kinase domain is found at 8 to 334 (YDLIREVGRG…LELRLVQIAF (327 aa)). ATP-binding positions include 14–22 (VGRGSYGVV) and Lys37. Asp164 serves as the catalytic Proton acceptor.

Belongs to the protein kinase superfamily. Ser/Thr protein kinase family.

It is found in the nucleus. The catalysed reaction is L-seryl-[protein] + ATP = O-phospho-L-seryl-[protein] + ADP + H(+). It catalyses the reaction L-threonyl-[protein] + ATP = O-phospho-L-threonyl-[protein] + ADP + H(+). This chain is Serine/threonine-protein kinase PDIK1L (Pdik1l), found in Mus musculus (Mouse).